The sequence spans 422 residues: Phosphoribosylamine--glycine ligase (422 aa).

In terms of domain architecture, ATP-grasp spans 107-312 (KDVMAAAGVR…LGQLLHAAAT (206 aa)). 137-193 (GPPAGDPAWVVKDDRLAAGKGVVVTADRDVARAHGAALLEAGHPVLLESYLDGPEVS) provides a ligand contact to ATP. Mg(2+)-binding residues include glutamate 282 and asparagine 284.

It belongs to the GARS family. The cofactor is Mg(2+). It depends on Mn(2+) as a cofactor.

It carries out the reaction 5-phospho-beta-D-ribosylamine + glycine + ATP = N(1)-(5-phospho-beta-D-ribosyl)glycinamide + ADP + phosphate + H(+). The protein operates within purine metabolism; IMP biosynthesis via de novo pathway; N(1)-(5-phospho-D-ribosyl)glycinamide from 5-phospho-alpha-D-ribose 1-diphosphate: step 2/2. The protein is Phosphoribosylamine--glycine ligase of Mycobacterium bovis (strain ATCC BAA-935 / AF2122/97).